We begin with the raw amino-acid sequence, 122 residues long: Ribonuclease P protein component 1 (122 aa).

This sequence belongs to the eukaryotic/archaeal RNase P protein component 1 family. In terms of assembly, consists of a catalytic RNA component and at least 4-5 protein subunits.

Its subcellular location is the cytoplasm. It catalyses the reaction Endonucleolytic cleavage of RNA, removing 5'-extranucleotides from tRNA precursor.. In terms of biological role, part of ribonuclease P, a protein complex that generates mature tRNA molecules by cleaving their 5'-ends. This Thermococcus sibiricus (strain DSM 12597 / MM 739) protein is Ribonuclease P protein component 1.